An 85-amino-acid polypeptide reads, in one-letter code: Large ribosomal subunit protein bL27 (85 aa).

Belongs to the bacterial ribosomal protein bL27 family.

The chain is Large ribosomal subunit protein bL27 from Pseudomonas aeruginosa (strain LESB58).